The sequence spans 380 residues: Heme A synthase (380 aa).

A run of 8 helical transmembrane segments spans residues 36-56 (IRAWLAVLFALVVAMIVVGGL), 125-145 (VIGLVWALGFFGFLLARKIPA), 151-171 (LILPGVLGGVQGAVGAWMVAS), 187-207 (LATHLGLAFVILGLLAWSILQ), 227-247 (FGLATGWLHLAFLQILIGALV), 287-307 (LVQFIHRIVGYLLLAYGVMVW), 320-340 (FAFNAGFAALSLQVVLGIVTV), and 344-364 (APWQIAILHQLLAVGVFVLIL). Residue histidine 292 participates in heme binding. Histidine 352 contacts heme.

This sequence belongs to the COX15/CtaA family. Type 2 subfamily. In terms of assembly, interacts with CtaB. Heme b serves as cofactor.

Its subcellular location is the cell membrane. It catalyses the reaction Fe(II)-heme o + 2 A + H2O = Fe(II)-heme a + 2 AH2. The protein operates within porphyrin-containing compound metabolism; heme A biosynthesis; heme A from heme O: step 1/1. Catalyzes the conversion of heme O to heme A by two successive hydroxylations of the methyl group at C8. The first hydroxylation forms heme I, the second hydroxylation results in an unstable dihydroxymethyl group, which spontaneously dehydrates, resulting in the formyl group of heme A. The polypeptide is Heme A synthase (Ruegeria pomeroyi (strain ATCC 700808 / DSM 15171 / DSS-3) (Silicibacter pomeroyi)).